The primary structure comprises 324 residues: Ribose 1,5-bisphosphate isomerase (324 aa).

Substrate-binding positions include 22–25 (RGAG) and Arg-65. Cys-135 acts as the Proton acceptor in catalysis. 137–139 (SKA) contacts substrate. The Proton donor role is filled by Asp-204. Residues 214–215 (NK) and Lys-240 each bind substrate.

The protein belongs to the eIF-2B alpha/beta/delta subunits family. R15P isomerase subfamily.

The catalysed reaction is alpha-D-ribose 1,5-bisphosphate = D-ribulose 1,5-bisphosphate. Catalyzes the isomerization of ribose 1,5-bisphosphate (R15P) to ribulose 1,5-bisphosphate (RuBP), the CO(2) acceptor and substrate for RubisCO. Functions in an archaeal AMP degradation pathway, together with AMP phosphorylase and RubisCO. This is Ribose 1,5-bisphosphate isomerase from Pyrococcus horikoshii (strain ATCC 700860 / DSM 12428 / JCM 9974 / NBRC 100139 / OT-3).